The following is a 332-amino-acid chain: Glycerol-3-phosphate dehydrogenase [NAD(P)+] (332 aa).

The NADPH site is built by serine 11, tryptophan 12, lysine 32, and lysine 106. Residues lysine 106, glycine 137, and serine 139 each coordinate sn-glycerol 3-phosphate. Residue alanine 141 coordinates NADPH. Sn-glycerol 3-phosphate-binding residues include lysine 192, aspartate 245, serine 255, arginine 256, and asparagine 257. Lysine 192 (proton acceptor) is an active-site residue. Residue arginine 256 participates in NADPH binding. NADPH contacts are provided by valine 280 and glutamate 282.

Belongs to the NAD-dependent glycerol-3-phosphate dehydrogenase family.

The protein resides in the cytoplasm. It catalyses the reaction sn-glycerol 3-phosphate + NAD(+) = dihydroxyacetone phosphate + NADH + H(+). The enzyme catalyses sn-glycerol 3-phosphate + NADP(+) = dihydroxyacetone phosphate + NADPH + H(+). It participates in membrane lipid metabolism; glycerophospholipid metabolism. Functionally, catalyzes the reduction of the glycolytic intermediate dihydroxyacetone phosphate (DHAP) to sn-glycerol 3-phosphate (G3P), the key precursor for phospholipid synthesis. This Macrococcus caseolyticus (strain JCSC5402) (Macrococcoides caseolyticum) protein is Glycerol-3-phosphate dehydrogenase [NAD(P)+].